The primary structure comprises 507 residues: ATP synthase subunit alpha, chloroplastic (507 aa).

170-177 (GDRQTGKT) is an ATP binding site.

This sequence belongs to the ATPase alpha/beta chains family. F-type ATPases have 2 components, CF(1) - the catalytic core - and CF(0) - the membrane proton channel. CF(1) has five subunits: alpha(3), beta(3), gamma(1), delta(1), epsilon(1). CF(0) has four main subunits: a, b, b' and c.

The protein resides in the plastid. It localises to the chloroplast thylakoid membrane. It catalyses the reaction ATP + H2O + 4 H(+)(in) = ADP + phosphate + 5 H(+)(out). In terms of biological role, produces ATP from ADP in the presence of a proton gradient across the membrane. The alpha chain is a regulatory subunit. This is ATP synthase subunit alpha, chloroplastic from Cucumis sativus (Cucumber).